The sequence spans 128 residues: uncharacterized protein (128 aa).

Residues Met1 to Ser11 are compositionally biased toward basic and acidic residues. Positions Met1–Asp40 are disordered. Positions Lys12–Asn37 are enriched in polar residues.

This is an uncharacterized protein from Caenorhabditis elegans.